An 82-amino-acid chain; its full sequence is Small ribosomal subunit protein uS17 (82 aa).

This sequence belongs to the universal ribosomal protein uS17 family. In terms of assembly, part of the 30S ribosomal subunit.

Functionally, one of the primary rRNA binding proteins, it binds specifically to the 5'-end of 16S ribosomal RNA. The protein is Small ribosomal subunit protein uS17 of Aeromonas hydrophila subsp. hydrophila (strain ATCC 7966 / DSM 30187 / BCRC 13018 / CCUG 14551 / JCM 1027 / KCTC 2358 / NCIMB 9240 / NCTC 8049).